We begin with the raw amino-acid sequence, 180 residues long: dCTP deaminase, dUMP-forming (180 aa).

DCTP-binding positions include 100–105, Asp-117, 125–127, Gln-146, Tyr-160, and Gln-167; these read RSSLGR and TLE. The active-site Proton donor/acceptor is Glu-127.

This sequence belongs to the dCTP deaminase family. Homotrimer.

The enzyme catalyses dCTP + 2 H2O = dUMP + NH4(+) + diphosphate. Its pathway is pyrimidine metabolism; dUMP biosynthesis; dUMP from dCTP: step 1/1. Its function is as follows. Bifunctional enzyme that catalyzes both the deamination of dCTP to dUTP and the hydrolysis of dUTP to dUMP without releasing the toxic dUTP intermediate. This Sulfurihydrogenibium sp. (strain YO3AOP1) protein is dCTP deaminase, dUMP-forming.